Here is a 155-residue protein sequence, read N- to C-terminus: Ribosomal RNA large subunit methyltransferase H (155 aa).

Residues L72, G103, and 122–127 (FGRMVW) contribute to the S-adenosyl-L-methionine site.

This sequence belongs to the RNA methyltransferase RlmH family. Homodimer.

The protein resides in the cytoplasm. It catalyses the reaction pseudouridine(1915) in 23S rRNA + S-adenosyl-L-methionine = N(3)-methylpseudouridine(1915) in 23S rRNA + S-adenosyl-L-homocysteine + H(+). In terms of biological role, specifically methylates the pseudouridine at position 1915 (m3Psi1915) in 23S rRNA. The polypeptide is Ribosomal RNA large subunit methyltransferase H (Paracoccus denitrificans (strain Pd 1222)).